The sequence spans 89 residues: DNA/RNA-binding protein Alba (89 aa).

It belongs to the histone-like Alba family.

Its subcellular location is the cytoplasm. The protein resides in the chromosome. Functionally, binds double-stranded DNA tightly but without sequence specificity. Involved in DNA compaction. This chain is DNA/RNA-binding protein Alba, found in Methanococcus maripaludis (strain DSM 14266 / JCM 13030 / NBRC 101832 / S2 / LL).